The sequence spans 246 residues: Ribonuclease PH (246 aa).

Phosphate contacts are provided by residues Arg-91 and 129–131; that span reads GTR.

It belongs to the RNase PH family. In terms of assembly, homohexameric ring arranged as a trimer of dimers.

It carries out the reaction tRNA(n+1) + phosphate = tRNA(n) + a ribonucleoside 5'-diphosphate. Its function is as follows. Phosphorolytic 3'-5' exoribonuclease that plays an important role in tRNA 3'-end maturation. Removes nucleotide residues following the 3'-CCA terminus of tRNAs; can also add nucleotides to the ends of RNA molecules by using nucleoside diphosphates as substrates, but this may not be physiologically important. Probably plays a role in initiation of 16S rRNA degradation (leading to ribosome degradation) during starvation. This Paraburkholderia xenovorans (strain LB400) protein is Ribonuclease PH.